The following is a 444-amino-acid chain: Probable kynurenine--oxoglutarate transaminase BNA3 (444 aa).

Lysine 271 is subject to N6-(pyridoxal phosphate)lysine.

This sequence belongs to the class-I pyridoxal-phosphate-dependent aminotransferase family. In terms of assembly, homodimer. It depends on pyridoxal 5'-phosphate as a cofactor.

It is found in the cytoplasm. The protein resides in the mitochondrion. The enzyme catalyses L-kynurenine + 2-oxoglutarate = kynurenate + L-glutamate + H2O. The protein operates within amino-acid degradation; L-kynurenine degradation; kynurenate from L-kynurenine: step 1/2. Functionally, catalyzes the irreversible transamination of the L-tryptophan metabolite L-kynurenine to form kynurenic acid (KA). This is Probable kynurenine--oxoglutarate transaminase BNA3 (BNA3) from Saccharomyces cerevisiae (strain ATCC 204508 / S288c) (Baker's yeast).